Consider the following 211-residue polypeptide: Succinate dehydrogenase subunit 4, mitochondrial (211 aa).

Residues 1-36 (MASRLLARSKALALALSRADAAAPGPAAGVQWLRTL) constitute a mitochondrion transit peptide. Residues 41–64 (RDPAAAASPAPAPRQPAVGSPLGL) form a disordered region. Position 166 (His166) interacts with heme. An a ubiquinone-binding site is contributed by Tyr179. The chain crosses the membrane as a helical span at residues 188 to 210 (WVFIYFKILLIIMAKETVVYFDL).

As to quaternary structure, component of complex II composed of eight subunits in plants: four classical SDH subunits SDH1, SDH2, SDH3 and SDH4 (a flavoprotein (FP), an iron-sulfur protein (IP), and a cytochrome b composed of a large and a small subunit.), as well as four subunits unknown in mitochondria from bacteria and heterotrophic eukaryotes. Heme serves as cofactor.

The protein localises to the mitochondrion inner membrane. The protein operates within carbohydrate metabolism; tricarboxylic acid cycle. Functionally, membrane-anchoring subunit of succinate dehydrogenase (SDH). This chain is Succinate dehydrogenase subunit 4, mitochondrial, found in Oryza sativa subsp. japonica (Rice).